Consider the following 704-residue polypeptide: Elongation factor G (704 aa).

In terms of domain architecture, tr-type G spans 8 to 291; it reads DRVRNIGIMA…AVIDYLASPV (284 aa). GTP is bound by residues 17 to 24, 90 to 94, and 144 to 147; these read AHIDAGKT, DTPGH, and NKMD.

Belongs to the TRAFAC class translation factor GTPase superfamily. Classic translation factor GTPase family. EF-G/EF-2 subfamily.

It localises to the cytoplasm. Catalyzes the GTP-dependent ribosomal translocation step during translation elongation. During this step, the ribosome changes from the pre-translocational (PRE) to the post-translocational (POST) state as the newly formed A-site-bound peptidyl-tRNA and P-site-bound deacylated tRNA move to the P and E sites, respectively. Catalyzes the coordinated movement of the two tRNA molecules, the mRNA and conformational changes in the ribosome. This Chlorobaculum tepidum (strain ATCC 49652 / DSM 12025 / NBRC 103806 / TLS) (Chlorobium tepidum) protein is Elongation factor G.